The following is a 189-amino-acid chain: Pyridoxal 5'-phosphate synthase subunit PdxT (189 aa).

G50–S52 provides a ligand contact to L-glutamine. The active-site Nucleophile is the C80. L-glutamine-binding positions include R107 and I134–R135. Residues H169 and E171 each act as charge relay system in the active site.

The protein belongs to the glutaminase PdxT/SNO family. As to quaternary structure, in the presence of PdxS, forms a dodecamer of heterodimers. Only shows activity in the heterodimer.

The catalysed reaction is aldehydo-D-ribose 5-phosphate + D-glyceraldehyde 3-phosphate + L-glutamine = pyridoxal 5'-phosphate + L-glutamate + phosphate + 3 H2O + H(+). It carries out the reaction L-glutamine + H2O = L-glutamate + NH4(+). It functions in the pathway cofactor biosynthesis; pyridoxal 5'-phosphate biosynthesis. Its function is as follows. Catalyzes the hydrolysis of glutamine to glutamate and ammonia as part of the biosynthesis of pyridoxal 5'-phosphate. The resulting ammonia molecule is channeled to the active site of PdxS. The polypeptide is Pyridoxal 5'-phosphate synthase subunit PdxT (Picrophilus torridus (strain ATCC 700027 / DSM 9790 / JCM 10055 / NBRC 100828 / KAW 2/3)).